Consider the following 86-residue polypeptide: Probable protein BRICK1 (86 aa).

A coiled-coil region spans residues 47-81 (EATTKSKLASLNEKLDILERKLEVLEVQVSSATTN).

The protein belongs to the BRK1 family. Binds SCAR.

The protein localises to the cytoplasm. The protein resides in the cytoskeleton. Involved in regulation of actin and microtubule organization. Part of a WAVE complex that activates the Arp2/3 complex. In Oryza sativa subsp. japonica (Rice), this protein is Probable protein BRICK1.